The sequence spans 380 residues: Cytochrome b (380 aa).

The next 4 membrane-spanning stretches (helical) occupy residues phenylalanine 34–methionine 54, tryptophan 78–isoleucine 99, tryptophan 114–leucine 134, and phenylalanine 179–threonine 199. Heme b is bound by residues histidine 84 and histidine 98. Residues histidine 183 and histidine 197 each coordinate heme b. Histidine 202 contributes to the a ubiquinone binding site. The next 4 membrane-spanning stretches (helical) occupy residues threonine 227 to serine 247, leucine 289 to histidine 309, leucine 321 to serine 341, and phenylalanine 348 to proline 368.

The protein belongs to the cytochrome b family. In terms of assembly, the cytochrome bc1 complex contains 11 subunits: 3 respiratory subunits (MT-CYB, CYC1 and UQCRFS1), 2 core proteins (UQCRC1 and UQCRC2) and 6 low-molecular weight proteins (UQCRH/QCR6, UQCRB/QCR7, UQCRQ/QCR8, UQCR10/QCR9, UQCR11/QCR10 and a cleavage product of UQCRFS1). This cytochrome bc1 complex then forms a dimer. Heme b is required as a cofactor.

Its subcellular location is the mitochondrion inner membrane. In terms of biological role, component of the ubiquinol-cytochrome c reductase complex (complex III or cytochrome b-c1 complex) that is part of the mitochondrial respiratory chain. The b-c1 complex mediates electron transfer from ubiquinol to cytochrome c. Contributes to the generation of a proton gradient across the mitochondrial membrane that is then used for ATP synthesis. This Aerodramus vulcanorum (Volcano swiftlet) protein is Cytochrome b (MT-CYB).